The sequence spans 51 residues: Non-specific lipid-transfer protein (51 aa).

Belongs to the plant LTP family.

Plant non-specific lipid-transfer proteins transfer phospholipids as well as galactolipids across membranes. May play a role in wax or cutin deposition in the cell walls of expanding epidermal cells and certain secretory tissues. The protein is Non-specific lipid-transfer protein of Lycium barbarum (Barbary matrimony-vine).